Here is a 69-residue protein sequence, read N- to C-terminus: DNA-directed RNA polymerase subunit omega (69 aa).

This sequence belongs to the RNA polymerase subunit omega family. The RNAP catalytic core consists of 2 alpha, 1 beta, 1 beta' and 1 omega subunit. When a sigma factor is associated with the core the holoenzyme is formed, which can initiate transcription.

It catalyses the reaction RNA(n) + a ribonucleoside 5'-triphosphate = RNA(n+1) + diphosphate. In terms of biological role, promotes RNA polymerase assembly. Latches the N- and C-terminal regions of the beta' subunit thereby facilitating its interaction with the beta and alpha subunits. This is DNA-directed RNA polymerase subunit omega from Pediococcus pentosaceus (strain ATCC 25745 / CCUG 21536 / LMG 10740 / 183-1w).